We begin with the raw amino-acid sequence, 682 residues long: Acetyl-coenzyme A synthetase 2-like, mitochondrial (682 aa).

The N-terminal 38 residues, 1–38 (MAARSLGSGVGRLLRGLQGRSGQSGWSLSVSRSTATRL), are a transit peptide targeting the mitochondrion. Residues 217–220 (RGGR) and threonine 334 each bind CoA. Lysine 389 bears the N6-acetyllysine mark. ATP contacts are provided by residues 410–412 (GEP), 434–439 (DTWWQT), aspartate 526, and arginine 541. Serine 549 contacts CoA. Arginine 552 contacts ATP. Lysine 635 bears the N6-acetyllysine mark.

It belongs to the ATP-dependent AMP-binding enzyme family. As to quaternary structure, interacts with SIRT3. Post-translationally, reversibly acetylated at Lys-635. The acetyl-CoA synthase activity is inhibited by acetylation and activated by deacetylation mediated by the deacetylase SIRT3. In terms of tissue distribution, highly expressed in heart, testis, kidney, skeletal muscle, lung and spleen. Detected at low levels in brain.

The protein localises to the mitochondrion matrix. It catalyses the reaction acetate + ATP + CoA = acetyl-CoA + AMP + diphosphate. It carries out the reaction propanoate + ATP + CoA = propanoyl-CoA + AMP + diphosphate. Inhibited by acetylation at Lys-635 and activated by deacetylation mediated by the deacetylase SIRT3. Catalyzes the synthesis of acetyl-CoA from short-chain fatty acids. Acetate is the preferred substrate. Can also utilize propionate with a much lower affinity. Provides acetyl-CoA that is utilized mainly for oxidation under ketogenic conditions. Involved in thermogenesis under ketogenic conditions, using acetate as a vital fuel when carbohydrate availability is insufficient. The chain is Acetyl-coenzyme A synthetase 2-like, mitochondrial (Acss1) from Mus musculus (Mouse).